A 327-amino-acid chain; its full sequence is ATP-dependent (S)-NAD(P)H-hydrate dehydratase (327 aa).

A YjeF C-terminal domain is found at 11 to 313 (LLTRVKRIIP…RHVGKAYNAL (303 aa)). Residues glycine 121 and 174–180 (NVIEFKR) each bind (6S)-NADPHX. Residues 209–213 (KGQSD) and 228–237 (GGLKRCGGQG) contribute to the ATP site. (6S)-NADPHX is bound at residue aspartate 238.

It belongs to the NnrD/CARKD family. Requires Mg(2+) as cofactor.

The protein localises to the cytoplasm. It catalyses the reaction (6S)-NADHX + ATP = ADP + phosphate + NADH + H(+). The enzyme catalyses (6S)-NADPHX + ATP = ADP + phosphate + NADPH + H(+). Functionally, catalyzes the dehydration of the S-form of NAD(P)HX at the expense of ATP, which is converted to ADP. Together with NAD(P)HX epimerase, which catalyzes the epimerization of the S- and R-forms, the enzyme allows the repair of both epimers of NAD(P)HX, a damaged form of NAD(P)H that is a result of enzymatic or heat-dependent hydration. This chain is ATP-dependent (S)-NAD(P)H-hydrate dehydratase, found in Schizosaccharomyces pombe (strain 972 / ATCC 24843) (Fission yeast).